We begin with the raw amino-acid sequence, 430 residues long: Adenylosuccinate synthetase (430 aa).

GTP is bound by residues 12 to 18 (GDEGKGK) and 40 to 42 (GHT). The active-site Proton acceptor is the Asp13. Mg(2+)-binding residues include Asp13 and Gly40. Residues 13–16 (DEGK), 38–41 (NAGH), Thr130, Arg144, Gln225, Thr240, and Arg304 each bind IMP. The active-site Proton donor is the His41. 300-306 (ATTGRPR) contributes to the substrate binding site. Residues Arg306, 332–334 (KLD), and 414–416 (SIG) each bind GTP.

This sequence belongs to the adenylosuccinate synthetase family. In terms of assembly, homodimer. The cofactor is Mg(2+).

The protein localises to the cytoplasm. The catalysed reaction is IMP + L-aspartate + GTP = N(6)-(1,2-dicarboxyethyl)-AMP + GDP + phosphate + 2 H(+). The protein operates within purine metabolism; AMP biosynthesis via de novo pathway; AMP from IMP: step 1/2. Functionally, plays an important role in the de novo pathway of purine nucleotide biosynthesis. Catalyzes the first committed step in the biosynthesis of AMP from IMP. This chain is Adenylosuccinate synthetase, found in Geobacter metallireducens (strain ATCC 53774 / DSM 7210 / GS-15).